The following is a 380-amino-acid chain: MSTEMLGMILAGGQGTRLGKLTKTTAKPSVPFGGRYRIIDFTLSNLANSGVNTAGVITQYQPLELNRHIQNGASWGLNERGAGVTILQPYASSEGEKFFEGTAHAIYQNIAYIDSYNPQYLLILSGDHIYKMDYQAMLDYHKAKKASLTVAVMPVEKEEAKRFGIMNTDDTDRIIEFEEKPAKPKSNLASMGIYIFNWPTLKQYLTESYATDGAMEDFGHDVIPAYLTHNEASYAYAFRGYWKDVGTIQSLWEANMEFLNPNNPLNIGNRNWRIFSQNEALPPMFLTKTAKVAGSMIVDGCYVAGSIQHSILSQNVKIGEGSVIKDSMIMPNAVIGKNVTVDHAIVGENAIIGDNGKVVGKPNEISVVGYGEVLGRTEKE.

Residues Gly-164, 179–180 (EK), and Ser-190 contribute to the alpha-D-glucose 1-phosphate site.

Belongs to the bacterial/plant glucose-1-phosphate adenylyltransferase family. In terms of assembly, homotetramer.

It catalyses the reaction alpha-D-glucose 1-phosphate + ATP + H(+) = ADP-alpha-D-glucose + diphosphate. The protein operates within glycan biosynthesis; glycogen biosynthesis. Involved in the biosynthesis of ADP-glucose, a building block required for the elongation reactions to produce glycogen. Catalyzes the reaction between ATP and alpha-D-glucose 1-phosphate (G1P) to produce pyrophosphate and ADP-Glc. The protein is Glucose-1-phosphate adenylyltransferase of Lacticaseibacillus casei (strain BL23) (Lactobacillus casei).